Consider the following 374-residue polypeptide: Phosphate acyltransferase (374 aa).

The interval 323-374 is disordered; that stretch reads AEMVDPREPESNPRRRTRPLQVYSGSGPEVLPLGSLERTSSRCPEPVEDAQP. Residues 326–335 show a composition bias toward basic and acidic residues; the sequence is VDPREPESNP.

This sequence belongs to the PlsX family. Homodimer. Probably interacts with PlsY.

Its subcellular location is the cytoplasm. The catalysed reaction is a fatty acyl-[ACP] + phosphate = an acyl phosphate + holo-[ACP]. Its pathway is lipid metabolism; phospholipid metabolism. Catalyzes the reversible formation of acyl-phosphate (acyl-PO(4)) from acyl-[acyl-carrier-protein] (acyl-ACP). This enzyme utilizes acyl-ACP as fatty acyl donor, but not acyl-CoA. The sequence is that of Phosphate acyltransferase from Synechococcus sp. (strain JA-2-3B'a(2-13)) (Cyanobacteria bacterium Yellowstone B-Prime).